The following is a 413-amino-acid chain: Na(+)-translocating NADH-quinone reductase subunit B (413 aa).

3 consecutive transmembrane segments (helical) span residues 55-75 (IMIM…YNAG), 128-148 (FLPI…LFCM), and 163-183 (ILFA…LGIT). T235 carries the FMN phosphoryl threonine modification. The next 5 helical transmembrane spans lie at 267–287 (IPGS…AMIV), 296–316 (IIAG…VIGS), 324–344 (MPWH…FMAT), 357–377 (WWYG…NPAY), and 380–400 (GMML…HVVI).

This sequence belongs to the NqrB/RnfD family. In terms of assembly, composed of six subunits; NqrA, NqrB, NqrC, NqrD, NqrE and NqrF. Requires FMN as cofactor.

It localises to the cell inner membrane. It carries out the reaction a ubiquinone + n Na(+)(in) + NADH + H(+) = a ubiquinol + n Na(+)(out) + NAD(+). Its function is as follows. NQR complex catalyzes the reduction of ubiquinone-1 to ubiquinol by two successive reactions, coupled with the transport of Na(+) ions from the cytoplasm to the periplasm. NqrA to NqrE are probably involved in the second step, the conversion of ubisemiquinone to ubiquinol. This Vibrio campbellii (strain ATCC BAA-1116) protein is Na(+)-translocating NADH-quinone reductase subunit B.